The following is a 348-amino-acid chain: tRNA N6-adenosine threonylcarbamoyltransferase (348 aa).

2 residues coordinate Fe cation: H115 and H119. Residues 138 to 142, D171, G184, and N276 contribute to the substrate site; that span reads LVSGG. A Fe cation-binding site is contributed by D304.

It belongs to the KAE1 / TsaD family. It depends on Fe(2+) as a cofactor.

The protein localises to the cytoplasm. The catalysed reaction is L-threonylcarbamoyladenylate + adenosine(37) in tRNA = N(6)-L-threonylcarbamoyladenosine(37) in tRNA + AMP + H(+). In terms of biological role, required for the formation of a threonylcarbamoyl group on adenosine at position 37 (t(6)A37) in tRNAs that read codons beginning with adenine. Is involved in the transfer of the threonylcarbamoyl moiety of threonylcarbamoyl-AMP (TC-AMP) to the N6 group of A37, together with TsaE and TsaB. TsaD likely plays a direct catalytic role in this reaction. The chain is tRNA N6-adenosine threonylcarbamoyltransferase from Xylella fastidiosa (strain M23).